Here is a 342-residue protein sequence, read N- to C-terminus: Holliday junction branch migration complex subunit RuvB (342 aa).

A large ATPase domain (RuvB-L) region spans residues 1–179; the sequence is MTNILSPEKS…FGIPMRLNFY (179 aa). ATP-binding positions include isoleucine 18, arginine 19, glycine 60, lysine 63, threonine 64, threonine 65, 126 to 128, arginine 169, tyrosine 179, and arginine 216; that span reads EDF. Threonine 64 provides a ligand contact to Mg(2+). The tract at residues 180–250 is small ATPAse domain (RuvB-S); the sequence is NTEELKKVLN…VSDFGLNRLE (71 aa). Residues 253 to 342 form a head domain (RuvB-H) region; that stretch reads RIGLDSNDYR…HQFNIFNENE (90 aa). DNA contacts are provided by arginine 289, arginine 308, and arginine 313.

This sequence belongs to the RuvB family. As to quaternary structure, homohexamer. Forms an RuvA(8)-RuvB(12)-Holliday junction (HJ) complex. HJ DNA is sandwiched between 2 RuvA tetramers; dsDNA enters through RuvA and exits via RuvB. An RuvB hexamer assembles on each DNA strand where it exits the tetramer. Each RuvB hexamer is contacted by two RuvA subunits (via domain III) on 2 adjacent RuvB subunits; this complex drives branch migration. In the full resolvosome a probable DNA-RuvA(4)-RuvB(12)-RuvC(2) complex forms which resolves the HJ.

It is found in the cytoplasm. The enzyme catalyses ATP + H2O = ADP + phosphate + H(+). Functionally, the RuvA-RuvB-RuvC complex processes Holliday junction (HJ) DNA during genetic recombination and DNA repair, while the RuvA-RuvB complex plays an important role in the rescue of blocked DNA replication forks via replication fork reversal (RFR). RuvA specifically binds to HJ cruciform DNA, conferring on it an open structure. The RuvB hexamer acts as an ATP-dependent pump, pulling dsDNA into and through the RuvAB complex. RuvB forms 2 homohexamers on either side of HJ DNA bound by 1 or 2 RuvA tetramers; 4 subunits per hexamer contact DNA at a time. Coordinated motions by a converter formed by DNA-disengaged RuvB subunits stimulates ATP hydrolysis and nucleotide exchange. Immobilization of the converter enables RuvB to convert the ATP-contained energy into a lever motion, pulling 2 nucleotides of DNA out of the RuvA tetramer per ATP hydrolyzed, thus driving DNA branch migration. The RuvB motors rotate together with the DNA substrate, which together with the progressing nucleotide cycle form the mechanistic basis for DNA recombination by continuous HJ branch migration. Branch migration allows RuvC to scan DNA until it finds its consensus sequence, where it cleaves and resolves cruciform DNA. This is Holliday junction branch migration complex subunit RuvB from Rickettsia rickettsii (strain Sheila Smith).